Consider the following 601-residue polypeptide: HIRA-interacting protein 3 (601 aa).

2 disordered regions span residues 60 to 469 and 546 to 601; these read KMQA…EDHP and STGR…GDSS. A compositionally biased stretch (basic and acidic residues) spans 66 to 76; it reads GTREGKPDFIK. A phosphoserine mark is found at S85, S96, and S98. The span at 97-113 shows a compositional bias: low complexity; the sequence is ESESSSSPSSPDGSGPS. The span at 117 to 129 shows a compositional bias: basic residues; the sequence is RTTKKTCLRRALK. Basic and acidic residues predominate over residues 130–149; it reads KAVESTDEDHQTDLDAKMGL. S134 carries the post-translational modification Phosphoserine. Phosphothreonine is present on residues T135 and T141. A phosphoserine mark is found at S152, S153, and S163. The residue at position 167 (T167) is a Phosphothreonine. The span at 186–205 shows a compositional bias: basic and acidic residues; sequence GAKDKQVPLKADRKQVREES. 11 positions are modified to phosphoserine: S205, S207, S208, S231, S234, S238, S313, S359, S360, S384, and S389. Composition is skewed to basic and acidic residues over residues 238-264 and 313-324; these read SPAKKKELSEPRSRSNRAERTARERKS and SSEKGEAEKEEG. Polar residues predominate over residues 347–378; it reads RTQTESGRRQNTSSRDDSNSTQEQAAAQGTTK. Over residues 379 to 388 the composition is skewed to low complexity; it reads SGSLGSSNGD. Position 391 is a phosphothreonine (T391). Phosphoserine occurs at positions 396 and 398. The segment covering 413 to 432 has biased composition (low complexity); that stretch reads SNKSSKNGQARSCSSSSDSS. The segment at 429 to 572 is interaction with the histone H2A-H2B complex; that stretch reads SDSSPEPTGQ…TSPGETYRRT (144 aa). The segment covering 556–566 has biased composition (polar residues); that stretch reads WNPSGEGTSPG. S564, S575, S595, S596, and S600 each carry phosphoserine. Positions 568 to 580 are enriched in basic and acidic residues; it reads TYRRTLDSEEEQP.

In terms of assembly, interacts (via C-terminus) with histone H2A-H2B dimers; the interaction is direct. Interacts with HIRA. Interacts with CK2. Post-translationally, phosphorylated by CK2.

Its subcellular location is the nucleus. Its function is as follows. Histone chaperone that carries a H2A-H2B histone complex and facilitates its deposition onto chromatin. The sequence is that of HIRA-interacting protein 3 from Mus musculus (Mouse).